A 906-amino-acid chain; its full sequence is MLSILKKLFGTANDRTVKKLFSEITKINSLEHAIQKLSDEELKNKTVEFKEKLKNGATLDDIVYEAFAVVREAARRVCGMRHFDVQLIGGLILHRGMITEMRTGEGKTLVATLPAYLNALTGKGVHVVTVNDYLARRDSAAMGKIYNFLGLSVGCIVAGMPDEAKRAAYNADITHATNNELGFDYLRDNMKYSLQERVLRPFNFAIIDEVDSILIDEARTPLVISGPVNDNSELYGKIDKIVRLLNINDFEKDEKLKTINLTETGITHIESLLSKEGIIKPDTGLYDFENLTLVHYVNQALRAHNMFTVDVDYLVREGKVMIIDEFTGRVMEGRRYSEGLHQALEAKENVKIQNENQTLASVTFQNYFRNYPKLSGMTGTAMTEAPELKDIYNLDVVAVPTHNKVTRLDLDDEIYGSKKEKYDAILKLIKDCYDRGQPILVGTISIEKSEELSSVLNAEKIPHKVLNAKFHEQEACIIAQAGRFKAVTIATNMAGRGTDIMLGGNPEMLIEHLDKDHNYAAKIDEIKAQIAEEKKQVIEAGGLFVIGTERHESRRIDNQLRGRSGRQGDPGKTKFFLSLDDDLMRIFASDRISGVLRTLGLKDGEAIQHPMISRSLEKAQQKVEGYNYEMRKNLLRFDDVMNDQRKIIYEQRTEIIKSKDSYGFLNSTTEELAKKIVLAFMPVGSYREDWDIENLSVELHRVFAIKFDHNLVSKSDVTEEEITKIVIQMAHDVYKSKEEAYSSELMHNAVKYILLTTLDQVWKDHLYSLDHLRQGISLRAYAQKDPLSEYKREAFNLFEQMLNNLKELFIQAVYHFHIDLKHVQKEDVSLERKKLQNNMRESREDPAFSKYNAGSSLETHLKPVVSRIDPKDRNPDDPTSWGRVSRNELCPCSSGKKYKYCHGAHE.

Residues Q86, 104 to 108, and D499 each bind ATP; that span reads GEGKT. The interval 863 to 885 is disordered; that stretch reads PVVSRIDPKDRNPDDPTSWGRVS. 4 residues coordinate Zn(2+): C890, C892, C901, and H902.

Belongs to the SecA family. In terms of assembly, monomer and homodimer. Part of the essential Sec protein translocation apparatus which comprises SecA, SecYEG and auxiliary proteins SecDF-YajC and YidC. It depends on Zn(2+) as a cofactor.

The protein resides in the cell inner membrane. It is found in the cytoplasm. The catalysed reaction is ATP + H2O + cellular proteinSide 1 = ADP + phosphate + cellular proteinSide 2.. Its function is as follows. Part of the Sec protein translocase complex. Interacts with the SecYEG preprotein conducting channel. Has a central role in coupling the hydrolysis of ATP to the transfer of proteins into and across the cell membrane, serving both as a receptor for the preprotein-SecB complex and as an ATP-driven molecular motor driving the stepwise translocation of polypeptide chains across the membrane. This chain is Protein translocase subunit SecA, found in Rickettsia akari (strain Hartford).